A 124-amino-acid chain; its full sequence is KESAAAKFERQHMDSSTSSASSSNYCNQMMKSRNLTQDRCKPVNTFVHEPLADVQAVCSQKNVACKNGQTNCYQSYSTMSITDCRETGSSKYPNCAYKATQAKKHIIVACEGNPYVPVHFDASV.

Positions 1–13 are enriched in basic and acidic residues; it reads KESAAAKFERQHM. The interval 1 to 24 is disordered; sequence KESAAAKFERQHMDSSTSSASSSN. Substrate-binding residues include lysine 7 and arginine 10. Histidine 12 acts as the Proton acceptor in catalysis. 4 disulfides stabilise this stretch: cysteine 26-cysteine 84, cysteine 40-cysteine 95, cysteine 58-cysteine 110, and cysteine 65-cysteine 72. Substrate is bound by residues 41–45, lysine 66, and arginine 85; that span reads KPVNT. Histidine 119 serves as the catalytic Proton donor.

The protein belongs to the pancreatic ribonuclease family. As to quaternary structure, monomer. Interacts with and forms tight 1:1 complexes with RNH1. Dimerization of two such complexes may occur. Interaction with RNH1 inhibits this protein. Pancreas.

It localises to the secreted. The catalysed reaction is an [RNA] containing cytidine + H2O = an [RNA]-3'-cytidine-3'-phosphate + a 5'-hydroxy-ribonucleotide-3'-[RNA].. It carries out the reaction an [RNA] containing uridine + H2O = an [RNA]-3'-uridine-3'-phosphate + a 5'-hydroxy-ribonucleotide-3'-[RNA].. Functionally, endonuclease that catalyzes the cleavage of RNA on the 3' side of pyrimidine nucleotides. Acts on single-stranded and double-stranded RNA. This chain is Ribonuclease pancreatic (RNASE1), found in Connochaetes taurinus (Blue wildebeest).